The sequence spans 49 residues: MISSIHLRKLLGLLPEAYLPFDPIIDVLPIIPVLFLLLAFVWQAAVKFR.

Residues 1–12 (MISSIHLRKLLG) constitute a propeptide that is removed on maturation. A helical transmembrane segment spans residues 24 to 44 (IIDVLPIIPVLFLLLAFVWQA).

The protein belongs to the PsbK family. PSII is composed of 1 copy each of membrane proteins PsbA, PsbB, PsbC, PsbD, PsbE, PsbF, PsbH, PsbI, PsbJ, PsbK, PsbL, PsbM, PsbT, PsbX, PsbY, PsbZ, Psb30/Ycf12, at least 3 peripheral proteins of the oxygen-evolving complex and a large number of cofactors. It forms dimeric complexes.

The protein resides in the plastid. It localises to the chloroplast thylakoid membrane. In terms of biological role, one of the components of the core complex of photosystem II (PSII). PSII is a light-driven water:plastoquinone oxidoreductase that uses light energy to abstract electrons from H(2)O, generating O(2) and a proton gradient subsequently used for ATP formation. It consists of a core antenna complex that captures photons, and an electron transfer chain that converts photonic excitation into a charge separation. This is Photosystem II reaction center protein K from Phacus acuminatus.